The primary structure comprises 183 residues: UPF0302 protein BH3876 (183 aa).

This sequence belongs to the UPF0302 family.

This chain is UPF0302 protein BH3876, found in Halalkalibacterium halodurans (strain ATCC BAA-125 / DSM 18197 / FERM 7344 / JCM 9153 / C-125) (Bacillus halodurans).